Reading from the N-terminus, the 529-residue chain is Bifunctional purine biosynthesis protein PurH (529 aa).

The MGS-like domain occupies 1 to 148 (MQQRRPVRRA…KNHKDVAIVV (148 aa)). Lys287 is subject to N6-acetyllysine.

This sequence belongs to the PurH family.

It catalyses the reaction (6R)-10-formyltetrahydrofolate + 5-amino-1-(5-phospho-beta-D-ribosyl)imidazole-4-carboxamide = 5-formamido-1-(5-phospho-D-ribosyl)imidazole-4-carboxamide + (6S)-5,6,7,8-tetrahydrofolate. The catalysed reaction is IMP + H2O = 5-formamido-1-(5-phospho-D-ribosyl)imidazole-4-carboxamide. The protein operates within purine metabolism; IMP biosynthesis via de novo pathway; 5-formamido-1-(5-phospho-D-ribosyl)imidazole-4-carboxamide from 5-amino-1-(5-phospho-D-ribosyl)imidazole-4-carboxamide (10-formyl THF route): step 1/1. It participates in purine metabolism; IMP biosynthesis via de novo pathway; IMP from 5-formamido-1-(5-phospho-D-ribosyl)imidazole-4-carboxamide: step 1/1. The chain is Bifunctional purine biosynthesis protein PurH from Escherichia coli O157:H7.